The primary structure comprises 122 residues: UPF0344 protein BcerKBAB4_1054 (122 aa).

4 helical membrane passes run 6–26 (ITAW…YSAG), 38–58 (LMYI…VKTA), 65–85 (WYGM…MVLV), and 92–112 (PTGA…YLGL).

This sequence belongs to the UPF0344 family.

The protein resides in the cell membrane. This Bacillus mycoides (strain KBAB4) (Bacillus weihenstephanensis) protein is UPF0344 protein BcerKBAB4_1054.